We begin with the raw amino-acid sequence, 376 residues long: Erythronate-4-phosphate dehydrogenase (376 aa).

Residues Ser45 and Thr67 each coordinate substrate. Asp147 is an NAD(+) binding site. The active site involves Arg209. Asp233 is a binding site for NAD(+). The active site involves Glu238. Residue His255 is the Proton donor of the active site. Gly258 lines the NAD(+) pocket. Tyr259 is a substrate binding site.

The protein belongs to the D-isomer specific 2-hydroxyacid dehydrogenase family. PdxB subfamily. Homodimer.

It localises to the cytoplasm. It carries out the reaction 4-phospho-D-erythronate + NAD(+) = (R)-3-hydroxy-2-oxo-4-phosphooxybutanoate + NADH + H(+). Its pathway is cofactor biosynthesis; pyridoxine 5'-phosphate biosynthesis; pyridoxine 5'-phosphate from D-erythrose 4-phosphate: step 2/5. Functionally, catalyzes the oxidation of erythronate-4-phosphate to 3-hydroxy-2-oxo-4-phosphonooxybutanoate. The chain is Erythronate-4-phosphate dehydrogenase from Shewanella halifaxensis (strain HAW-EB4).